The following is a 400-amino-acid chain: Clotting factor B (400 aa).

The signal sequence occupies residues 1-23 (MTWICVITLFALASATLGNKVSR). The Clip domain occupies 36–80 (ECTARGGLKGSCKSLIDCPSVLATLKDSFPVVCSWNGRFQPIVCC). 3 disulfides stabilise this stretch: cysteine 37-cysteine 79, cysteine 47-cysteine 68, and cysteine 53-cysteine 80. The propeptide at 104-124 (LPRLHISGCGKRKVKIDITTV) is activation peptide. N-linked (GlcNAc...) asparagine glycosylation occurs at asparagine 140. The Peptidase S1 domain maps to 148–392 (IAGGVEAKIG…YLDWIAKVTN (245 aa)). Residues histidine 192 and aspartate 240 each act as charge relay system in the active site. Asparagine 251 carries N-linked (GlcNAc...) asparagine glycosylation. Intrachain disulfides connect cysteine 307–cysteine 329 and cysteine 340–cysteine 368. Serine 344 (charge relay system) is an active-site residue. N-linked (GlcNAc...) asparagine glycosylation occurs at asparagine 352.

It belongs to the peptidase S1 family. CLIP subfamily. Upon activation by factor C, it is converted to a two-chain active form composed of a light and a heavy chain linked by a disulfide bond.

Its subcellular location is the secreted. It catalyses the reaction Selective cleavage of 98-Arg-|-Ile-99 bond in Limulus proclotting enzyme to form active clotting enzyme.. Strongly inhibited by alpha2-plasmin inhibitor and DFP. Partially inhibited by benzamidine, leupeptin and PCMB. Functionally, this enzyme is closely associated with an endotoxin-sensitive hemolymph coagulation system which may play important roles in both hemostasis and host defense mechanisms. Its active form catalyzes the activation of proclotting enzyme. Does not activate the mammalian coagulation factors factor IX, factor X, prothrombin, plasminogen, protein C or prekallikrein. Does not hydrolyze fibrinogen. Does not catalyze the activation of factor C or coagulogen. The protein is Clotting factor B of Tachypleus tridentatus (Japanese horseshoe crab).